The chain runs to 1838 residues: Collagen alpha-1(V) chain (1838 aa).

The N-terminal stretch at 1–36 (MDVHTRWKAARPGALLLSSPLLLFLLLLWAPPSSRA) is a signal peptide. The Laminin G-like domain occupies 72–244 (DVAYRVSKDA…DYCEHYSPDC (173 aa)). Residues 231 to 443 (RAAYDYCEHY…MPANQDTIFE (213 aa)) are nonhelical region. A sulfotyrosine mark is found at Tyr-234, Tyr-236, Tyr-240, Tyr-262, and Tyr-263. Disordered regions lie at residues 242-545 (PDCD…QESQ) and 559-1574 (GPAG…EVIQ). The span at 258–268 (NPDEYYPEGEG) shows a compositional bias: acidic residues. Low complexity-rich tracts occupy residues 335–345 (DYDYVPPDDYY), 374–387 (VPTS…TSNP), 413–428 (YDPY…VSPS), and 460–469 (IIEPGMLIEG). The interrupted collagenous region stretch occupies residues 444 to 558 (GIGGPRGEKG…ILQQARLALR (115 aa)). Residues 470-485 (PPGPEGPAGLPGPPGT) show a composition bias toward pro residues. Low complexity-rich tracts occupy residues 506-523 (LPGA…LMLP) and 559-570 (GPAGPMGLTGRP). The interval 559–1570 (GPAGPMGLTG…GLPGPPGPPG (1012 aa)) is triple-helical region. 4-hydroxyproline occurs at positions 570, 576, and 621. Residue Lys-627 is modified to 5-hydroxylysine. Pro-639 carries the 4-hydroxyproline modification. Lys-642 bears the 5-hydroxylysine mark. 4-hydroxyproline is present on residues Pro-648, Pro-654, Pro-657, Pro-675, and Pro-678. Over residues 671–686 (PRGLPGEPGPRGLLGP) the composition is skewed to low complexity. Pro-680 and Pro-686 each carry 3-hydroxyproline. A compositionally biased stretch (pro residues) spans 687–696 (KGPPGPPGPP). Residues Pro-690, Pro-696, and Pro-705 each carry the 4-hydroxyproline modification. Lys-708 is modified (5-hydroxylysine). Residues Pro-717, Pro-720, Pro-726, and Pro-732 each carry the 4-hydroxyproline modification. Residues 722–741 (QQGNPGAQGLPGPQGAIGPP) show a composition bias toward low complexity. Lys-744 carries the 5-hydroxylysine modification. Residues 747-756 (LGKPGLPGMP) show a composition bias toward low complexity. 4-hydroxyproline occurs at positions 750, 756, 762, 765, and 771. Lys-774 is modified (5-hydroxylysine). 2 positions are modified to 4-hydroxyproline: Pro-780 and Pro-789. 5-hydroxylysine is present on residues Lys-795, Lys-804, Lys-807, and Lys-810. Pro-816 carries the 4-hydroxyproline modification. Lys-819 carries the post-translational modification 5-hydroxylysine. A 4-hydroxyproline modification is found at Pro-834. The span at 837-846 (RGEDGPEGPK) shows a compositional bias: basic and acidic residues. 2 positions are modified to 5-hydroxylysine: Lys-846 and Lys-864. A 4-hydroxyproline mark is found at Pro-870, Pro-873, and Pro-876. The residue at position 882 (Lys-882) is a 5-hydroxylysine. 4-hydroxyproline occurs at positions 888 and 891. A 5-hydroxylysine modification is found at Lys-897. 4-hydroxyproline occurs at positions 903 and 906. Positions 908–917 (PRGQRGPTGP) are enriched in low complexity. 4-hydroxyproline is present on residues Pro-930 and Pro-945. Composition is skewed to low complexity over residues 971–990 (KDGL…QGKT) and 999–1011 (VGPQ…TGPM). 4-hydroxyproline is present on residues Pro-1017, Pro-1020, Pro-1023, and Pro-1029. Positions 1088–1104 (SPGERGPAGAAGPIGIP) are enriched in low complexity. Pro residues predominate over residues 1106 to 1115 (RPGPQGPPGP). 4-hydroxyproline is present on residues Pro-1221 and Pro-1224. The segment covering 1259–1268 (PSGAPGADGP) has biased composition (low complexity). The segment covering 1294–1303 (GLPGEGGPLG) has biased composition (gly residues). Pro residues-rich tracts occupy residues 1380-1398 (TGEP…PGPA) and 1454-1469 (SPGP…PPGL). 4-hydroxyproline occurs at positions 1467 and 1470. Residues 1485 to 1494 (PGLIGLIGPP) show a composition bias toward low complexity. Over residues 1526–1541 (PLGPPGPPGLPGPPGP) the composition is skewed to pro residues. Low complexity predominate over residues 1542-1554 (KGAKGSSGPTGPK). Positions 1571–1605 (EVIQPLPIQASRTRRNIDASQLLDDGAGESYVDYA) are nonhelical region. Sulfotyrosine is present on residues Tyr-1601 and Tyr-1604. One can recognise a Fibrillar collagen NC1 domain in the interval 1609–1837 (EEIFGSLNSL…GFEVGPACFL (229 aa)).

This sequence belongs to the fibrillar collagen family. Trimers of two alpha 1(V) and one alpha 2(V) chains in most tissues and trimers of one alpha 1(V), one alpha 2(V), and one alpha 3(V) chains in placenta. Interacts with CSPG4. In terms of processing, hydroxylation on proline residues within the sequence motif, GXPG, is most likely to be 4-hydroxy as this fits the requirement for 4-hydroxylation in vertebrates. Sulfated on 40% of tyrosines. In terms of tissue distribution, widely expressed. Isoform 2 is more highly expressed in liver, kidney and lung.

Its subcellular location is the secreted. It is found in the extracellular space. The protein resides in the extracellular matrix. Its function is as follows. Type V collagen is a member of group I collagen (fibrillar forming collagen). It is a minor connective tissue component of nearly ubiquitous distribution. Type V collagen binds to DNA, heparan sulfate, thrombospondin, heparin, and insulin. Transcriptionally activated by CEBPZ, which recognizes a CCAAT-like motif, CAAAT in the COL5A1 promoter. This chain is Collagen alpha-1(V) chain (Col5a1), found in Mus musculus (Mouse).